A 502-amino-acid polypeptide reads, in one-letter code: Probable cytosol aminopeptidase (502 aa).

2 residues coordinate Mn(2+): K265 and D270. Residue K277 is part of the active site. D288, D347, and E349 together coordinate Mn(2+). R351 is a catalytic residue.

Belongs to the peptidase M17 family. Requires Mn(2+) as cofactor.

It localises to the cytoplasm. It carries out the reaction Release of an N-terminal amino acid, Xaa-|-Yaa-, in which Xaa is preferably Leu, but may be other amino acids including Pro although not Arg or Lys, and Yaa may be Pro. Amino acid amides and methyl esters are also readily hydrolyzed, but rates on arylamides are exceedingly low.. The enzyme catalyses Release of an N-terminal amino acid, preferentially leucine, but not glutamic or aspartic acids.. Presumably involved in the processing and regular turnover of intracellular proteins. Catalyzes the removal of unsubstituted N-terminal amino acids from various peptides. This chain is Probable cytosol aminopeptidase, found in Rickettsia bellii (strain RML369-C).